Here is a 244-residue protein sequence, read N- to C-terminus: 5-oxoprolinase subunit A (244 aa).

It belongs to the LamB/PxpA family. Forms a complex composed of PxpA, PxpB and PxpC.

It catalyses the reaction 5-oxo-L-proline + ATP + 2 H2O = L-glutamate + ADP + phosphate + H(+). In terms of biological role, catalyzes the cleavage of 5-oxoproline to form L-glutamate coupled to the hydrolysis of ATP to ADP and inorganic phosphate. The protein is 5-oxoprolinase subunit A of Salmonella typhi.